Reading from the N-terminus, the 591-residue chain is UvrABC system protein C (591 aa).

Positions 14–91 (DQPGCYLMKD…IKKHDPKYNV (78 aa)) constitute a GIY-YIG domain. The UVR domain maps to 196 to 231 (KEVKVELEKKMHKAAEELNFERAKELRDTLGYMEAV).

This sequence belongs to the UvrC family. Interacts with UvrB in an incision complex.

It is found in the cytoplasm. The UvrABC repair system catalyzes the recognition and processing of DNA lesions. UvrC both incises the 5' and 3' sides of the lesion. The N-terminal half is responsible for the 3' incision and the C-terminal half is responsible for the 5' incision. In Halalkalibacterium halodurans (strain ATCC BAA-125 / DSM 18197 / FERM 7344 / JCM 9153 / C-125) (Bacillus halodurans), this protein is UvrABC system protein C.